The primary structure comprises 53 residues: Rho GTPase-activating protein 6 (53 aa).

It is found in the cytoplasm. In terms of biological role, GTPase activator for the Rho-type GTPases by converting them to an inactive GDP-bound state. Could regulate the interactions of signaling molecules with the actin cytoskeleton. Promotes continuous elongation of cytoplasmic processes during cell motility and simultaneous retraction of the cell body changing the cell morphology. In Takifugu rubripes (Japanese pufferfish), this protein is Rho GTPase-activating protein 6 (arhgap6).